We begin with the raw amino-acid sequence, 336 residues long: RHOMBOID-like protein 12, mitochondrial (336 aa).

Residues 1 to 85 (MKAIFNRRVV…RGFFASALGN (85 aa)) constitute a mitochondrion transit peptide. The next 6 helical transmembrane spans lie at 135 to 155 (VVLGLVIANAGVFVMWRVFNQ), 185 to 205 (IDIGHIVSNMIGLYFFGTSIA), 216 to 236 (LYLAGALGGSVFYLIHHAYMA), 254 to 274 (PGLGASGAVNAIMLLDIFLHP), 276 to 296 (ATLYLEFFIPVPAMLLGIFLI), and 307 to 327 (NSNISGSAHLGGAAVAAIAWA). S259 serves as the catalytic Nucleophile. H315 functions as the Charge relay system in the catalytic mechanism.

It belongs to the peptidase S54 family.

The protein localises to the mitochondrion membrane. Its function is as follows. Probable rhomboid-type serine protease that catalyzes intramembrane proteolysis. Unable to cleave either of the yeast Pcp1 substrates in yeast cells. In Arabidopsis thaliana (Mouse-ear cress), this protein is RHOMBOID-like protein 12, mitochondrial.